Reading from the N-terminus, the 439-residue chain is Homogentisate 1,2-dioxygenase (439 aa).

The Proton acceptor role is filled by histidine 289. Fe cation is bound by residues histidine 332 and glutamate 338. Residues tyrosine 347 and histidine 368 each contribute to the homogentisate site. Histidine 368 is a binding site for Fe cation.

This sequence belongs to the homogentisate dioxygenase family. As to quaternary structure, hexamer; dimer of trimers. Requires Fe cation as cofactor.

It carries out the reaction homogentisate + O2 = 4-maleylacetoacetate + H(+). It functions in the pathway amino-acid degradation; L-phenylalanine degradation; acetoacetate and fumarate from L-phenylalanine: step 4/6. Its function is as follows. Involved in the catabolism of homogentisate (2,5-dihydroxyphenylacetate or 2,5-OH-PhAc), a central intermediate in the degradation of phenylalanine and tyrosine. Catalyzes the oxidative ring cleavage of the aromatic ring of homogentisate to yield maleylacetoacetate. The chain is Homogentisate 1,2-dioxygenase from Xanthomonas euvesicatoria pv. vesicatoria (strain 85-10) (Xanthomonas campestris pv. vesicatoria).